We begin with the raw amino-acid sequence, 360 residues long: GTPase Obg (360 aa).

Positions 1–156 (MFVDSVEIII…KCVRLELKLI (156 aa)) constitute an Obg domain. Residues 157 to 360 (ADIGLVGFPN…LKFVLLEALP (204 aa)) enclose the OBG-type G domain. GTP contacts are provided by residues 163–170 (GFPNAGKS), 188–192 (FTTLV), 210–213 (DIPG), 279–282 (NKCD), and 341–343 (SAV). Mg(2+) is bound by residues serine 170 and threonine 190.

It belongs to the TRAFAC class OBG-HflX-like GTPase superfamily. OBG GTPase family. As to quaternary structure, monomer. The cofactor is Mg(2+).

Its subcellular location is the cytoplasm. Functionally, an essential GTPase which binds GTP, GDP and possibly (p)ppGpp with moderate affinity, with high nucleotide exchange rates and a fairly low GTP hydrolysis rate. Plays a role in control of the cell cycle, stress response, ribosome biogenesis and in those bacteria that undergo differentiation, in morphogenesis control. In Helicobacter pylori (strain HPAG1), this protein is GTPase Obg.